The sequence spans 318 residues: CRISPR-associated endonuclease Cas1 1 (318 aa).

3 residues coordinate Mn(2+): Glu-157, His-222, and Glu-237.

Belongs to the CRISPR-associated endonuclease Cas1 family. As to quaternary structure, homodimer, forms a heterotetramer with a Cas2 homodimer. Mg(2+) serves as cofactor. Requires Mn(2+) as cofactor.

In terms of biological role, CRISPR (clustered regularly interspaced short palindromic repeat), is an adaptive immune system that provides protection against mobile genetic elements (viruses, transposable elements and conjugative plasmids). CRISPR clusters contain spacers, sequences complementary to antecedent mobile elements, and target invading nucleic acids. CRISPR clusters are transcribed and processed into CRISPR RNA (crRNA). Acts as a dsDNA endonuclease. Involved in the integration of spacer DNA into the CRISPR cassette. This is CRISPR-associated endonuclease Cas1 1 from Francisella tularensis subsp. novicida (strain U112).